The chain runs to 292 residues: Acetyl-coenzyme A carboxylase carboxyl transferase subunit beta (292 aa).

Residues 35–292 (VFSQCEQCNS…LKLHAKKVTS (258 aa)) form the CoA carboxyltransferase N-terminal domain. Residues C39, C42, C58, and C61 each coordinate Zn(2+). The segment at 39–61 (CEQCNSAIYNKDLEHNYEVCPYC) adopts a C4-type zinc-finger fold.

It belongs to the AccD/PCCB family. Acetyl-CoA carboxylase is a heterohexamer composed of biotin carboxyl carrier protein (AccB), biotin carboxylase (AccC) and two subunits each of ACCase subunit alpha (AccA) and ACCase subunit beta (AccD). It depends on Zn(2+) as a cofactor.

It is found in the cytoplasm. The enzyme catalyses N(6)-carboxybiotinyl-L-lysyl-[protein] + acetyl-CoA = N(6)-biotinyl-L-lysyl-[protein] + malonyl-CoA. It functions in the pathway lipid metabolism; malonyl-CoA biosynthesis; malonyl-CoA from acetyl-CoA: step 1/1. Functionally, component of the acetyl coenzyme A carboxylase (ACC) complex. Biotin carboxylase (BC) catalyzes the carboxylation of biotin on its carrier protein (BCCP) and then the CO(2) group is transferred by the transcarboxylase to acetyl-CoA to form malonyl-CoA. The polypeptide is Acetyl-coenzyme A carboxylase carboxyl transferase subunit beta (Acholeplasma laidlawii (strain PG-8A)).